The sequence spans 925 residues: Serine/threonine-protein kinase PLK4 (925 aa).

The Protein kinase domain occupies Phe12 to Met265. ATP is bound by residues Leu18–Val26 and Lys41. N6-acetyllysine occurs at positions 45 and 46. The Proton acceptor role is filled by Asp136. Disordered stretches follow at residues His262–Met283 and Lys328–Ser394. Positions Ser330–Phe341 are enriched in low complexity. Residues Cys342–Asn353 show a composition bias toward polar residues. Basic and acidic residues predominate over residues Arg359 to His369. A compositionally biased stretch (polar residues) spans Arg381–Lys391. Ser400 carries the post-translational modification Phosphoserine. Positions Glu517–Glu538 are disordered. Basic and acidic residues predominate over residues Leu525–Ser536. Residues Thr547–Lys660 form the Cryptic POLO box 1 (CPB1) domain. The 114-residue stretch at Thr661 to Pro774 folds into the Cryptic POLO box 2 (CPB2) domain. The residue at position 778 (Ser778) is a Phosphoserine. The 79-residue stretch at Gln841–Asn919 folds into the POLO box domain.

Belongs to the protein kinase superfamily. Ser/Thr protein kinase family. CDC5/Polo subfamily. As to quaternary structure, homodimer. Interacts with CEP152 (via N-terminus). Interacts with CEP78; this interaction may be important for proper PLK4 localization to the centriole and PLK4-induced overduplication of centrioles. Interacts with CEP131. Interacts simultaneously with TENT5C and CEP192. Interacts with TENT5C; this interaction leads to the TENT5C recruitment in the centrosome. Interacts with CEP85; this interaction may be important in cell migration and centriole assembly. In terms of processing, ubiquitinated; leading to its degradation by the proteasome. Deubiquitinated by USP54; leading to PLK4 stabilization. Tyrosine-phosphorylated by TEC. Post-translationally, acetylation by KAT2A and KAT2B impairs kinase activity by shifting the kinase to an inactive conformation. As to expression, expressed in tissues associated with mitotic and meiotic cell division. Highly expressed in testis.

It is found in the cytoplasm. The protein localises to the cytoskeleton. The protein resides in the microtubule organizing center. It localises to the centrosome. Its subcellular location is the centriole. It is found in the nucleus. The protein localises to the nucleolus. The protein resides in the cleavage furrow. It carries out the reaction L-seryl-[protein] + ATP = O-phospho-L-seryl-[protein] + ADP + H(+). The enzyme catalyses L-threonyl-[protein] + ATP = O-phospho-L-threonyl-[protein] + ADP + H(+). Its function is as follows. Serine/threonine-protein kinase that plays a central role in centriole duplication. Able to trigger procentriole formation on the surface of the parental centriole cylinder, leading to the recruitment of centriole biogenesis proteins such as SASS6, CPAP, CCP110, CEP135 and gamma-tubulin. When overexpressed, it is able to induce centrosome amplification through the simultaneous generation of multiple procentrioles adjoining each parental centriole during S phase. Phosphorylates 'Ser-151' of FBXW5 during the G1/S transition, leading to inhibit FBXW5 ability to ubiquitinate SASS6. Its central role in centriole replication suggests a possible role in tumorigenesis, centrosome aberrations being frequently observed in tumors. Phosphorylates CDC25C and CHEK2. Also involved in deuterosome-mediated centriole amplification in multiciliated that can generate more than 100 centrioles. Also involved in trophoblast differentiation by phosphorylating HAND1, leading to disrupt the interaction between HAND1 and MDFIC and activate HAND1. Required for the recruitment of STIL to the centriole and for STIL-mediated centriole amplification. Phosphorylates CEP131 at 'Ser-78' and PCM1 at 'Ser-372' which is essential for proper organization and integrity of centriolar satellites. This Mus musculus (Mouse) protein is Serine/threonine-protein kinase PLK4.